The sequence spans 226 residues: ATP-dependent dethiobiotin synthetase BioD (226 aa).

13–18 (DVGKTV) contributes to the ATP binding site. T17 is a Mg(2+) binding site. Residue K38 is part of the active site. ATP-binding positions include D55, 116–119 (EGAG), and 176–177 (NR). Mg(2+) contacts are provided by D55 and E116.

It belongs to the dethiobiotin synthetase family. As to quaternary structure, homodimer. The cofactor is Mg(2+).

Its subcellular location is the cytoplasm. It catalyses the reaction (7R,8S)-7,8-diammoniononanoate + CO2 + ATP = (4R,5S)-dethiobiotin + ADP + phosphate + 3 H(+). The protein operates within cofactor biosynthesis; biotin biosynthesis; biotin from 7,8-diaminononanoate: step 1/2. Catalyzes a mechanistically unusual reaction, the ATP-dependent insertion of CO2 between the N7 and N8 nitrogen atoms of 7,8-diaminopelargonic acid (DAPA, also called 7,8-diammoniononanoate) to form a ureido ring. The protein is ATP-dependent dethiobiotin synthetase BioD of Aliivibrio fischeri (strain MJ11) (Vibrio fischeri).